The chain runs to 275 residues: uncharacterized protein (275 aa).

The HTH araC/xylS-type domain occupies 171–268 (KMVCEFLEEH…GLTPKQYMKI (98 aa)). DNA-binding regions (H-T-H motif) lie at residues 188–209 (NDLSELTGWSKYHLLRSFTKQK) and 235–258 (PIDAAFQTGFSDQSHMTKFFKRQV).

This is an uncharacterized protein from Bacillus subtilis (strain 168).